The chain runs to 322 residues: Eukaryotic translation initiation factor 3 subunit I (322 aa).

WD repeat units lie at residues 4-43 (GHER…RLGT), 46-85 (GHQG…VIAS), 141-180 (MTES…KVVD), 184-223 (DHSA…CLKS), and 281-322 (GHFG…NIFE).

The protein belongs to the eIF-3 subunit I family. As to quaternary structure, component of the eukaryotic translation initiation factor 3 (eIF-3) complex. The eIF-3 complex interacts with pix.

It localises to the cytoplasm. Its function is as follows. Component of the eukaryotic translation initiation factor 3 (eIF-3) complex, which is involved in protein synthesis of a specialized repertoire of mRNAs and, together with other initiation factors, stimulates binding of mRNA and methionyl-tRNAi to the 40S ribosome. The eIF-3 complex specifically targets and initiates translation of a subset of mRNAs involved in cell proliferation. The sequence is that of Eukaryotic translation initiation factor 3 subunit I from Drosophila yakuba (Fruit fly).